Here is a 667-residue protein sequence, read N- to C-terminus: Protein OS-9 (667 aa).

A signal peptide spans 1-25 (MAAETLLSSLLGLLLLGLLLPATLT). Residues 108-230 (APCLLKTKDW…TIRTPRLCPH (123 aa)) enclose the MRH domain. The cysteines at positions 110 and 123 are disulfide-linked. A mannooligosaccharide derivative contacts are provided by Trp117, Trp118, and Gln130. Asn177 carries an N-linked (GlcNAc...) asparagine glycan. Disulfide bonds link Cys181/Cys216 and Cys196/Cys228. A mannooligosaccharide derivative is bound by residues Asp182, Arg188, Glu212, and Tyr218. 3 disordered regions span residues 262–450 (QADS…SDRE), 506–541 (EKQS…EHRV), and 636–667 (ERQR…EFDF). 3 stretches are compositionally biased toward basic and acidic residues: residues 263-279 (ADSK…RQDP), 304-328 (ENSK…KEET), and 396-408 (PSRE…KGDP). Acidic residues predominate over residues 410-429 (QQNEVEEEEDDEDEDEDEDE). Positions 430-450 (RQLLGEFEKELEGILLPSDRE) are enriched in basic and acidic residues. Over residues 514-523 (KKHRKRRVVP) the composition is skewed to basic residues. A compositionally biased stretch (basic and acidic residues) spans 636–647 (ERQRQKELESNY).

It belongs to the OS-9 family. Component of the HRD1 complex, which comprises at least SYNV1/HRD1, DERL1/2, FAM8A1, HERPUD1/HERP, OS9, SEL1L and UBE2J1. FAM8A1 is stabilized by interaction with SYNV1, which prevents its proteasomal degradation. OS9 and UBE2J1 recruitment to the complex may be mediated by SEL1L. Through this complex, may interact with ERLEC1 and HSPA5. Interacts (via C-terminus) with CPNE6 (via second C2 domain); this interaction occurs in a calcium-dependent manner in vitro. Interacts with CREB3. Intramolecular disulfide bonds.

The protein resides in the endoplasmic reticulum lumen. Its function is as follows. Lectin component of the HRD1 complex, which functions in endoplasmic reticulum (ER) quality control and ER-associated degradation (ERAD). Specifically recognizes and binds improperly folded glycoproteins as well as hyperglycosylated proteins, retain them in the ER, and transfers them to the ubiquitination machinery and promote their degradation. Possible targets include TRPV4 as well as hyperglycosylated HSP90B1. The polypeptide is Protein OS-9 (OS9) (Bos taurus (Bovine)).